The chain runs to 325 residues: Urease accessory protein UreD (325 aa).

Belongs to the UreD family. UreD, UreF and UreG form a complex that acts as a GTP-hydrolysis-dependent molecular chaperone, activating the urease apoprotein by helping to assemble the nickel containing metallocenter of UreC. The UreE protein probably delivers the nickel.

The protein localises to the cytoplasm. In terms of biological role, required for maturation of urease via the functional incorporation of the urease nickel metallocenter. Expression of the urease operon increases the likelihood of bacterial survival by contributing to acid resistance in vitro and in vivo in BALB/c mice. Y.enterocolitica enters the body via an oral path and must survive the acidic stomach before being able to colonize the intestinal mucosa. The protein is Urease accessory protein UreD of Yersinia enterocolitica.